We begin with the raw amino-acid sequence, 193 residues long: Potassium-transporting ATPase KdpC subunit (193 aa).

A helical transmembrane segment spans residues 7 to 27 (PLIVVFVVLVAVTGLAYPAVM).

Belongs to the KdpC family. In terms of assembly, the system is composed of three essential subunits: KdpA, KdpB and KdpC.

Its subcellular location is the cell inner membrane. In terms of biological role, part of the high-affinity ATP-driven potassium transport (or Kdp) system, which catalyzes the hydrolysis of ATP coupled with the electrogenic transport of potassium into the cytoplasm. This subunit acts as a catalytic chaperone that increases the ATP-binding affinity of the ATP-hydrolyzing subunit KdpB by the formation of a transient KdpB/KdpC/ATP ternary complex. In Burkholderia mallei (strain NCTC 10247), this protein is Potassium-transporting ATPase KdpC subunit.